Reading from the N-terminus, the 119-residue chain is MDKIVLESCRFYGYHGAFKEEQTLGQIFLVDLELSVDLQAASLSDQLTDTVHYGMVFDSVRQLVEGGKFILIERLAGAICEQLFNEFPPIEAIKVAIKKENPPIAGHYKAVGIELERQR.

Residues E21, Y53, and I72–E73 each bind substrate. K99 (proton donor/acceptor) is an active-site residue.

The protein belongs to the DHNA family.

The enzyme catalyses 7,8-dihydroneopterin = 6-hydroxymethyl-7,8-dihydropterin + glycolaldehyde. It functions in the pathway cofactor biosynthesis; tetrahydrofolate biosynthesis; 2-amino-4-hydroxy-6-hydroxymethyl-7,8-dihydropteridine diphosphate from 7,8-dihydroneopterin triphosphate: step 3/4. Functionally, catalyzes the conversion of 7,8-dihydroneopterin to 6-hydroxymethyl-7,8-dihydropterin. This chain is Dihydroneopterin aldolase (folB), found in Streptococcus pyogenes serotype M6 (strain ATCC BAA-946 / MGAS10394).